We begin with the raw amino-acid sequence, 398 residues long: Nicotinate phosphoribosyltransferase (398 aa).

Histidine 221 bears the Phosphohistidine; by autocatalysis mark.

Belongs to the NAPRTase family. Transiently phosphorylated on a His residue during the reaction cycle. Phosphorylation strongly increases the affinity for substrates and increases the rate of nicotinate D-ribonucleotide production. Dephosphorylation regenerates the low-affinity form of the enzyme, leading to product release.

It catalyses the reaction nicotinate + 5-phospho-alpha-D-ribose 1-diphosphate + ATP + H2O = nicotinate beta-D-ribonucleotide + ADP + phosphate + diphosphate. It functions in the pathway cofactor biosynthesis; NAD(+) biosynthesis; nicotinate D-ribonucleotide from nicotinate: step 1/1. Its function is as follows. Catalyzes the synthesis of beta-nicotinate D-ribonucleotide from nicotinate and 5-phospho-D-ribose 1-phosphate at the expense of ATP. The protein is Nicotinate phosphoribosyltransferase of Buchnera aphidicola subsp. Schizaphis graminum (strain Sg).